The following is a 367-amino-acid chain: MTSRNYLLLTPGPLTTSRTVKEAMLFDSCTWDDDYNIGVVEQIRQQLTALATASEGYTSVLLQGSGSYAVEAVLGSALGPQDKVLIVSNGAYGARMVEMSGLMGIAHHAYDCGEVARPDVQAIDAILNADPTISHIAMVHSETTTGMLNPIDEVGALAHRYGKTYIVDAMSSFGGIPMDIATLHIDYLISSANKCIQGVPGFAFVIAREQKLAACKGRSRSLSLDLYAQWRCMEDNHGKWRFTSPTHTVLAFAQALKELAKEGGVAARHQRYQQNQRSLVAGMRALGFNTLLDDELHSPIITAFYSPEDPQYRFSEFYRRLKEQGFVIYPGKVSQSDCFRIGNIGEVYAADITALLTAIRTAMYWMK.

Lys-194 is subject to N6-(pyridoxal phosphate)lysine.

It belongs to the class-V pyridoxal-phosphate-dependent aminotransferase family. PhnW subfamily. As to quaternary structure, homodimer. It depends on pyridoxal 5'-phosphate as a cofactor.

It carries out the reaction (2-aminoethyl)phosphonate + pyruvate = phosphonoacetaldehyde + L-alanine. Its function is as follows. Involved in phosphonate degradation. The protein is 2-aminoethylphosphonate--pyruvate transaminase of Salmonella agona (strain SL483).